The sequence spans 98 residues: Large ribosomal subunit protein bL21 (98 aa).

This sequence belongs to the bacterial ribosomal protein bL21 family. Part of the 50S ribosomal subunit. Contacts protein L20.

In terms of biological role, this protein binds to 23S rRNA in the presence of protein L20. This is Large ribosomal subunit protein bL21 from Aquifex aeolicus (strain VF5).